Reading from the N-terminus, the 997-residue chain is FIP1[III]-like protein (997 aa).

4 disordered regions span residues isoleucine 250–valine 272, alanine 289–glycine 475, serine 534–aspartate 553, and glutamine 880–glutamine 900. Residues serine 261–valine 272 are compositionally biased toward polar residues. Composition is skewed to basic and acidic residues over residues threonine 309–serine 323, serine 334–arginine 346, glutamate 367–glutamate 379, and arginine 388–glycine 404. The Nuclear localization signal signature appears at isoleucine 397 to glycine 404. Positions serine 534 to serine 547 are enriched in polar residues. Residues glutamate 930–lysine 963 adopt a coiled-coil conformation.

Belongs to the FIP1 family. In terms of assembly, component of the cleavage and polyadenylation specificity factor (CPSF) complex. Forms a complex with cleavage and polyadenylation specificity factor (CPSF) subunits CLPS5, FIPS5, PAPS4, PCFS1, CSTF64 and CPSF30.

The protein resides in the nucleus. Component of the cleavage and polyadenylation specificity factor (CPSF) complex that plays a key role in pre-mRNA 3'-end formation, recognizing the AAUAAA signal sequence and interacting with poly(A) polymerase and other factors to bring about cleavage and poly(A) addition. FIP1L1 contributes to poly(A) site recognition and stimulates poly(A) addition. Binds to U-rich RNA sequence elements surrounding the poly(A) site. May act to tether poly(A) polymerase to the CPSF complex. This is FIP1[III]-like protein from Arabidopsis thaliana (Mouse-ear cress).